The primary structure comprises 165 residues: Nascent polypeptide-associated complex subunit beta (165 aa).

Disordered stretches follow at residues 1 to 34 (MDQAKLARMQASVRIGGKGTPRRKVKKVHKTSGA) and 133 to 165 (QNMQKNQAGEKKDDDEDDIPDLVEGENFEKSVD). Residues 20–30 (TPRRKVKKVHK) are compositionally biased toward basic residues. Residues 33 to 110 (GADDKKLQAT…GEEKELTELV (78 aa)) enclose the NAC-A/B domain. Acidic residues predominate over residues 145–158 (DDDEDDIPDLVEGE).

The protein belongs to the NAC-beta family. As to quaternary structure, part of the nascent polypeptide-associated complex (NAC), consisting of egd2 and egd1. NAC associates with ribosomes via egd1.

The protein resides in the cytoplasm. It localises to the nucleus. Its function is as follows. Component of the nascent polypeptide-associated complex (NAC), a dynamic component of the ribosomal exit tunnel, protecting the emerging polypeptides from interaction with other cytoplasmic proteins to ensure appropriate nascent protein targeting. The NAC complex also promotes mitochondrial protein import by enhancing productive ribosome interactions with the outer mitochondrial membrane and blocks the inappropriate interaction of ribosomes translating non-secretory nascent polypeptides with translocation sites in the membrane of the endoplasmic reticulum. EGD1 may act as a transcription factor that exert a negative effect on the expression of several genes that are transcribed by RNA polymerase II. The polypeptide is Nascent polypeptide-associated complex subunit beta (egd1) (Emericella nidulans (strain FGSC A4 / ATCC 38163 / CBS 112.46 / NRRL 194 / M139) (Aspergillus nidulans)).